We begin with the raw amino-acid sequence, 216 residues long: Large ribosomal subunit protein uL1A (216 aa).

S85 and S128 each carry phosphoserine.

Belongs to the universal ribosomal protein uL1 family. In terms of assembly, component of the large ribosomal subunit (LSU). Mature yeast ribosomes consist of a small (40S) and a large (60S) subunit. The 40S small subunit contains 1 molecule of ribosomal RNA (18S rRNA) and at least 33 different proteins. The large 60S subunit contains 3 rRNA molecules (25S, 5.8S and 5S rRNA) and at least 46 different proteins. uL1 forms part of the L1 stalk.

It localises to the cytoplasm. Functionally, component of the ribosome, a large ribonucleoprotein complex responsible for the synthesis of proteins in the cell. The small ribosomal subunit (SSU) binds messenger RNAs (mRNAs) and translates the encoded message by selecting cognate aminoacyl-transfer RNA (tRNA) molecules. The large subunit (LSU) contains the ribosomal catalytic site termed the peptidyl transferase center (PTC), which catalyzes the formation of peptide bonds, thereby polymerizing the amino acids delivered by tRNAs into a polypeptide chain. The nascent polypeptides leave the ribosome through a tunnel in the LSU and interact with protein factors that function in enzymatic processing, targeting, and the membrane insertion of nascent chains at the exit of the ribosomal tunnel. uL1 forms part of the L1 stalk, a mobile element that plays a role in evacuating the exit-site tRNA. The chain is Large ribosomal subunit protein uL1A (rpl102) from Schizosaccharomyces pombe (strain 972 / ATCC 24843) (Fission yeast).